A 309-amino-acid polypeptide reads, in one-letter code: Lipoyl synthase (309 aa).

Residues C56, C61, C67, C82, C86, C89, and S296 each coordinate [4Fe-4S] cluster. The Radical SAM core domain maps to 68 to 285 (FKRGTATFMI…RVAGLKMGFS (218 aa)).

The protein belongs to the radical SAM superfamily. Lipoyl synthase family. Requires [4Fe-4S] cluster as cofactor.

It localises to the cytoplasm. The catalysed reaction is [[Fe-S] cluster scaffold protein carrying a second [4Fe-4S](2+) cluster] + N(6)-octanoyl-L-lysyl-[protein] + 2 oxidized [2Fe-2S]-[ferredoxin] + 2 S-adenosyl-L-methionine + 4 H(+) = [[Fe-S] cluster scaffold protein] + N(6)-[(R)-dihydrolipoyl]-L-lysyl-[protein] + 4 Fe(3+) + 2 hydrogen sulfide + 2 5'-deoxyadenosine + 2 L-methionine + 2 reduced [2Fe-2S]-[ferredoxin]. The protein operates within protein modification; protein lipoylation via endogenous pathway; protein N(6)-(lipoyl)lysine from octanoyl-[acyl-carrier-protein]: step 2/2. Catalyzes the radical-mediated insertion of two sulfur atoms into the C-6 and C-8 positions of the octanoyl moiety bound to the lipoyl domains of lipoate-dependent enzymes, thereby converting the octanoylated domains into lipoylated derivatives. The protein is Lipoyl synthase of Syntrophotalea carbinolica (strain DSM 2380 / NBRC 103641 / GraBd1) (Pelobacter carbinolicus).